The sequence spans 281 residues: MGAITLDGKATRDEIFVDLKQRVSELNASGRTPGLATILVGEDPGSQAYVRGKHSDCAKVGITSIRRDLPADISTATLNETIDELNANPDCTGYIVQLPLPKHLDENAALERIDPGKDADGLHPTNLGRLVLNTPAPLPCTPRGIVHLLRRYDVPIAGAHVVVIGRGVTVGRPLGLLLTRRSENATVTLCHTGTRDLPTLTRQADIIVAAVGVPHMLTADMVRPGAAVVDVGVSRVDGKLTGDVHPDVWEVAGHVSPNPGGVGPLTRAFLLTNVVELAEQR.

NADP(+) contacts are provided by residues glycine 165–glycine 167, threonine 192, and valine 233.

This sequence belongs to the tetrahydrofolate dehydrogenase/cyclohydrolase family. In terms of assembly, homodimer.

The enzyme catalyses (6R)-5,10-methylene-5,6,7,8-tetrahydrofolate + NADP(+) = (6R)-5,10-methenyltetrahydrofolate + NADPH. It catalyses the reaction (6R)-5,10-methenyltetrahydrofolate + H2O = (6R)-10-formyltetrahydrofolate + H(+). Its pathway is one-carbon metabolism; tetrahydrofolate interconversion. Catalyzes the oxidation of 5,10-methylenetetrahydrofolate to 5,10-methenyltetrahydrofolate and then the hydrolysis of 5,10-methenyltetrahydrofolate to 10-formyltetrahydrofolate. The protein is Bifunctional protein FolD of Mycobacterium marinum (strain ATCC BAA-535 / M).